A 334-amino-acid polypeptide reads, in one-letter code: Methionyl-tRNA formyltransferase (334 aa).

A (6S)-5,6,7,8-tetrahydrofolate-binding site is contributed by 111–114; that stretch reads SLLP.

This sequence belongs to the Fmt family.

The enzyme catalyses L-methionyl-tRNA(fMet) + (6R)-10-formyltetrahydrofolate = N-formyl-L-methionyl-tRNA(fMet) + (6S)-5,6,7,8-tetrahydrofolate + H(+). Attaches a formyl group to the free amino group of methionyl-tRNA(fMet). The formyl group appears to play a dual role in the initiator identity of N-formylmethionyl-tRNA by promoting its recognition by IF2 and preventing the misappropriation of this tRNA by the elongation apparatus. The protein is Methionyl-tRNA formyltransferase of Cyanothece sp. (strain PCC 7425 / ATCC 29141).